The following is a 340-amino-acid chain: Phosphoribosylformylglycinamidine cyclo-ligase (340 aa).

The protein belongs to the AIR synthase family.

Its subcellular location is the cytoplasm. It catalyses the reaction 2-formamido-N(1)-(5-O-phospho-beta-D-ribosyl)acetamidine + ATP = 5-amino-1-(5-phospho-beta-D-ribosyl)imidazole + ADP + phosphate + H(+). It functions in the pathway purine metabolism; IMP biosynthesis via de novo pathway; 5-amino-1-(5-phospho-D-ribosyl)imidazole from N(2)-formyl-N(1)-(5-phospho-D-ribosyl)glycinamide: step 2/2. The polypeptide is Phosphoribosylformylglycinamidine cyclo-ligase (Streptococcus pneumoniae (strain CGSP14)).